A 354-amino-acid polypeptide reads, in one-letter code: Alkanal monooxygenase alpha chain (354 aa).

It belongs to the bacterial luciferase oxidoreductase family. Heterodimer of an alpha and a beta chain.

It carries out the reaction a long-chain fatty aldehyde + FMNH2 + O2 = a long-chain fatty acid + hnu + FMN + H2O + 2 H(+). In terms of biological role, light-emitting reaction in luminous bacteria. This is Alkanal monooxygenase alpha chain (luxA) from Photobacterium leiognathi.